A 411-amino-acid chain; its full sequence is Receptor GIN3 (411 aa).

Topologically, residues 1-99 (MSGFVAGEEA…LLPILPHPRN (99 aa)) are extracellular. A helical transmembrane segment spans residues 100-120 (IPIIVPLFCVFTVMTSLAVGL). Over 121–134 (RLWSRQKVAGGIRS) the chain is Cytoplasmic. A helical membrane pass occupies residues 135-155 (FDWLALAGFGLTIIYGAVSVY). The Extracellular segment spans residues 156-181 (HSKVSGPYQAFYDRTWDQMKENYKVY). The helical transmembrane segment at 182–202 (LVLTIMYPFIMGLIKISLLLF) threads the bilayer. Residues 203 to 227 (YYRVATLNYVQWAVYATGSLTIANS) lie on the Cytoplasmic side of the membrane. Residues 228 to 248 (IAAIITHCLAFMPIDFWNHFL) form a helical membrane-spanning segment. Over 249–262 (QSPFKFNSRTPMLV) the chain is Extracellular. The chain crosses the membrane as a helical span at residues 263 to 283 (FGAVYILTDVAILIIPMPMVF). The Cytoplasmic segment spans residues 284–292 (QLKLYPREK). A helical transmembrane segment spans residues 293–313 (VIAVIAFSLGGVACVASGFRI). Topologically, residues 314-328 (WAIDEFQNYSGKNSS) are extracellular. N-linked (GlcNAc...) asparagine glycans are attached at residues Asn321 and Asn326. Residues 329–349 (GLMIDAWTMIELNLTLICASA) traverse the membrane as a helical segment. The Cytoplasmic portion of the chain corresponds to 350 to 411 (PAIRALAIHY…QSPVIPKEVV (62 aa)). The disordered stretch occupies residues 371 to 411 (FSSSGATRGSKSAGSSGKSKTPESEKSMQVSQSPVIPKEVV). Residues 372–389 (SSSGATRGSKSAGSSGKS) are compositionally biased toward low complexity.

This sequence belongs to the SAT4 family. In terms of assembly, interacts with guanine nucleotide-binding protein alpha GPA2; to activate adenylate cyclase and positively regulate nematode trap formation.

The protein resides in the cell membrane. Its function is as follows. Receptor that senses nematode-derived signals at the cell surface and signals via adenylate cyclase to positively regulate trap formation for nematode capture. The polypeptide is Receptor GIN3 (Arthrobotrys oligospora (strain ATCC 24927 / CBS 115.81 / DSM 1491) (Nematode-trapping fungus)).